Reading from the N-terminus, the 275-residue chain is Putative carbamate hydrolase RutD (275 aa).

The protein belongs to the AB hydrolase superfamily. Hydrolase RutD family.

It carries out the reaction carbamate + 2 H(+) = NH4(+) + CO2. Involved in pyrimidine catabolism. May facilitate the hydrolysis of carbamate, a reaction that can also occur spontaneously. In Escherichia coli (strain UTI89 / UPEC), this protein is Putative carbamate hydrolase RutD.